We begin with the raw amino-acid sequence, 767 residues long: ABC transporter B family member 4 (767 aa).

Positions 81–104 (NYSSSSNSGNNNNNNYNNKNNNNN) are disordered. 5 consecutive transmembrane segments (helical) span residues 208–228 (IWLFGFGIITAFFSSWVGLQI), 252–272 (AIFILLAQAGLNFLYSTMISV), 324–344 (VSLGVKSFGQIVGGVISLILI), 350–370 (LGMMTILPTMVSVGTFYAGWL), and 429–449 (IGIFQGVTSLALNSVSLLVYW). In terms of domain architecture, ABC transmembrane type-1 spans 211–491 (FGFGIITAFF…LSILFTQIMS (281 aa)). The region spanning 524–760 (IKFINVDFKY…KGLYYKLVQR (237 aa)) is the ABC transporter domain. An ATP-binding site is contributed by 559 to 566 (GSSGGGKS).

It belongs to the ABC transporter superfamily. ABCB family. Multidrug resistance exporter (TC 3.A.1.201) subfamily.

The protein resides in the membrane. This chain is ABC transporter B family member 4 (abcB4), found in Dictyostelium discoideum (Social amoeba).